The primary structure comprises 576 residues: Trehalase (576 aa).

The N-terminal stretch at 1–20 (MTWELHLLLLLGLGLRSQEA) is a signal peptide. Residue Asn-75 is glycosylated (N-linked (GlcNAc...) asparagine). Substrate is bound by residues Arg-165, 172–173 (WD), Asn-209, and 218–220 (RSQ). Asn-258 carries N-linked (GlcNAc...) asparagine glycosylation. Residues 283–285 (RPE) and Gly-316 contribute to the substrate site. Residue Asp-318 is the Proton donor/acceptor of the active site. Asn-366 carries an N-linked (GlcNAc...) asparagine glycan. Residue Glu-511 is the Proton donor/acceptor of the active site. Glu-526 serves as a coordination point for substrate. Residue Ser-553 is the site of GPI-anchor amidated serine attachment. Positions 554-576 (GTQLASLGPHCLVAALLLSLLLQ) are cleaved as a propeptide — removed in mature form.

Belongs to the glycosyl hydrolase 37 family. Homodimer; disulfide-linked.

Its subcellular location is the cell membrane. It carries out the reaction alpha,alpha-trehalose + H2O = alpha-D-glucose + beta-D-glucose. Its function is as follows. Intestinal trehalase is probably involved in the hydrolysis of ingested trehalose. The polypeptide is Trehalase (Mus musculus (Mouse)).